Consider the following 368-residue polypeptide: Glutamate 5-kinase (368 aa).

Lysine 12 contacts ATP. Substrate is bound by residues serine 52, aspartate 139, and asparagine 151. ATP contacts are provided by residues 171 to 172 (SD) and 213 to 219 (TGGMKTK). In terms of domain architecture, PUA spans 277-354 (KGALIIDDGA…KEIEKLLGYI (78 aa)).

The protein belongs to the glutamate 5-kinase family.

It is found in the cytoplasm. It catalyses the reaction L-glutamate + ATP = L-glutamyl 5-phosphate + ADP. It functions in the pathway amino-acid biosynthesis; L-proline biosynthesis; L-glutamate 5-semialdehyde from L-glutamate: step 1/2. Its function is as follows. Catalyzes the transfer of a phosphate group to glutamate to form L-glutamate 5-phosphate. In Pelagibacter ubique (strain HTCC1062), this protein is Glutamate 5-kinase.